Here is a 118-residue protein sequence, read N- to C-terminus: GRB2-related adapter protein-like (118 aa).

Residues 1-58 (MESVALYSFQATESDELAFNKGDTLKILNMEDDQNWYKAELRGVEGFIPKNYIRVKPH) form the SH3 domain. Residues 60–118 (WYSGRISRQLAEEILMKRNHLGAFLIRESESSPGEFSVSVNNRAQRGPCLGPKSHSRLG) form the SH2 domain. The interval 89–118 (ESSPGEFSVSVNNRAQRGPCLGPKSHSRLG) is disordered. Residues 90–103 (SSPGEFSVSVNNRA) show a composition bias toward polar residues.

It belongs to the GRB2/sem-5/DRK family.

The protein is GRB2-related adapter protein-like (GRAPL) of Homo sapiens (Human).